Here is a 373-residue protein sequence, read N- to C-terminus: UDP-N-acetylglucosamine--N-acetylmuramyl-(pentapeptide) pyrophosphoryl-undecaprenol N-acetylglucosamine transferase (373 aa).

UDP-N-acetyl-alpha-D-glucosamine contacts are provided by residues 16–18 (TGG), Asn128, Arg164, Ser192, Ile250, and Gln295.

The protein belongs to the glycosyltransferase 28 family. MurG subfamily.

The protein resides in the cell inner membrane. The enzyme catalyses di-trans,octa-cis-undecaprenyl diphospho-N-acetyl-alpha-D-muramoyl-L-alanyl-D-glutamyl-meso-2,6-diaminopimeloyl-D-alanyl-D-alanine + UDP-N-acetyl-alpha-D-glucosamine = di-trans,octa-cis-undecaprenyl diphospho-[N-acetyl-alpha-D-glucosaminyl-(1-&gt;4)]-N-acetyl-alpha-D-muramoyl-L-alanyl-D-glutamyl-meso-2,6-diaminopimeloyl-D-alanyl-D-alanine + UDP + H(+). Its pathway is cell wall biogenesis; peptidoglycan biosynthesis. Functionally, cell wall formation. Catalyzes the transfer of a GlcNAc subunit on undecaprenyl-pyrophosphoryl-MurNAc-pentapeptide (lipid intermediate I) to form undecaprenyl-pyrophosphoryl-MurNAc-(pentapeptide)GlcNAc (lipid intermediate II). The sequence is that of UDP-N-acetylglucosamine--N-acetylmuramyl-(pentapeptide) pyrophosphoryl-undecaprenol N-acetylglucosamine transferase from Paraburkholderia phymatum (strain DSM 17167 / CIP 108236 / LMG 21445 / STM815) (Burkholderia phymatum).